The following is a 914-amino-acid chain: Translation initiation factor IF-2 (914 aa).

The segment at 58-160 is disordered; sequence KTEKKQTAKK…EAEPKIEVMP (103 aa). Basic and acidic residues predominate over residues 70–91; the sequence is KKDTVKKDTVKKTAVKKDDSKA. Over residues 92–103 the composition is skewed to basic residues; it reads AKKTKPIAKKSA. Over residues 104–160 the composition is skewed to basic and acidic residues; the sequence is PKTEKKVEKKVESKISKPDNEILEAKPEISKPEIKAEPKKEEIEQKQEAEPKIEVMP. A tr-type G domain is found at 413 to 582; it reads ERVPVITIMG…LLQADLLELK (170 aa). The segment at 422–429 is G1; that stretch reads GHVDHGKT. 422–429 contacts GTP; the sequence is GHVDHGKT. A G2 region spans residues 447–451; that stretch reads GITQH. A G3 region spans residues 468 to 471; it reads DTPG. GTP is bound by residues 468–472 and 522–525; these read DTPGH and NKMD. A G4 region spans residues 522-525; sequence NKMD. Residues 558–560 are G5; sequence SAK.

Belongs to the TRAFAC class translation factor GTPase superfamily. Classic translation factor GTPase family. IF-2 subfamily.

It localises to the cytoplasm. In terms of biological role, one of the essential components for the initiation of protein synthesis. Protects formylmethionyl-tRNA from spontaneous hydrolysis and promotes its binding to the 30S ribosomal subunits. Also involved in the hydrolysis of GTP during the formation of the 70S ribosomal complex. The protein is Translation initiation factor IF-2 of Campylobacter hominis (strain ATCC BAA-381 / DSM 21671 / CCUG 45161 / LMG 19568 / NCTC 13146 / CH001A).